Reading from the N-terminus, the 316-residue chain is Biotin synthase (316 aa).

Residues 39–263 form the Radical SAM core domain; sequence NAIQCSTLLS…LFPKAYVRLS (225 aa). Cysteine 54, cysteine 58, and cysteine 61 together coordinate [4Fe-4S] cluster. [2Fe-2S] cluster is bound by residues cysteine 98, cysteine 129, cysteine 189, and arginine 261.

This sequence belongs to the radical SAM superfamily. Biotin synthase family. In terms of assembly, homodimer. The cofactor is [4Fe-4S] cluster. [2Fe-2S] cluster serves as cofactor.

It catalyses the reaction (4R,5S)-dethiobiotin + (sulfur carrier)-SH + 2 reduced [2Fe-2S]-[ferredoxin] + 2 S-adenosyl-L-methionine = (sulfur carrier)-H + biotin + 2 5'-deoxyadenosine + 2 L-methionine + 2 oxidized [2Fe-2S]-[ferredoxin]. The protein operates within cofactor biosynthesis; biotin biosynthesis; biotin from 7,8-diaminononanoate: step 2/2. Catalyzes the conversion of dethiobiotin (DTB) to biotin by the insertion of a sulfur atom into dethiobiotin via a radical-based mechanism. The chain is Biotin synthase from Acidithiobacillus ferrooxidans (strain ATCC 23270 / DSM 14882 / CIP 104768 / NCIMB 8455) (Ferrobacillus ferrooxidans (strain ATCC 23270)).